The chain runs to 359 residues: Biotin synthase (359 aa).

A Radical SAM core domain is found at 67-302 (CCGNRVDLCS…QQILRYAGGR (236 aa)). Positions 85, 89, and 92 each coordinate [4Fe-4S] cluster. The [2Fe-2S] cluster site is built by cysteine 130, cysteine 167, cysteine 227, and arginine 297.

The protein belongs to the radical SAM superfamily. Biotin synthase family. Homodimer. [4Fe-4S] cluster serves as cofactor. Requires [2Fe-2S] cluster as cofactor.

It carries out the reaction (4R,5S)-dethiobiotin + (sulfur carrier)-SH + 2 reduced [2Fe-2S]-[ferredoxin] + 2 S-adenosyl-L-methionine = (sulfur carrier)-H + biotin + 2 5'-deoxyadenosine + 2 L-methionine + 2 oxidized [2Fe-2S]-[ferredoxin]. It participates in cofactor biosynthesis; biotin biosynthesis; biotin from 7,8-diaminononanoate: step 2/2. Functionally, catalyzes the conversion of dethiobiotin (DTB) to biotin by the insertion of a sulfur atom into dethiobiotin via a radical-based mechanism. The protein is Biotin synthase of Gloeothece citriformis (strain PCC 7424) (Cyanothece sp. (strain PCC 7424)).